Reading from the N-terminus, the 423-residue chain is Galactosylceramide sulfotransferase (423 aa).

Residues 1–14 are Cytoplasmic-facing; it reads MPLPQKKRWESMAK. A helical; Signal-anchor for type II membrane protein membrane pass occupies residues 15 to 35; sequence GLVLGALFTSFLLLLYSYAVP. The Lumenal portion of the chain corresponds to 36-423; it reads PLYTGLASTT…WKFIRDFLRW (388 aa). Residues 48 to 70 form a disordered region; the sequence is GAAPCSPAPREPEAPTSANGSAG. N-linked (GlcNAc...) asparagine glycosylation is found at Asn66, Asn156, and Asn312.

It belongs to the galactose-3-O-sulfotransferase family.

It is found in the golgi apparatus membrane. The enzyme catalyses a beta-D-galactosyl-(1&lt;-&gt;1')-N-acylsphing-4-enine + 3'-phosphoadenylyl sulfate = an N-acyl-1-beta-D-(3-O-sulfo)-galactosyl-sphing-4-enine + adenosine 3',5'-bisphosphate + H(+). It carries out the reaction a 1-O-alkyl-2-acyl-3-O-(beta-D-galactosyl)-sn-glycerol + 3'-phosphoadenylyl sulfate = a 1-O-alkyl-2-acyl-3-(beta-D-3-sulfogalactosyl)-sn-glycerol + adenosine 3',5'-bisphosphate + H(+). The catalysed reaction is a beta-D-Gal-(1&lt;-&gt;1')-ceramide + 3'-phosphoadenylyl sulfate = 1-(3-O-sulfo-beta-D-galactosyl)-ceramide + adenosine 3',5'-bisphosphate + H(+). It catalyses the reaction a 1,2-diacyl-3-O-(beta-D-galactosyl)-sn-glycerol + 3'-phosphoadenylyl sulfate = 1,2-diacyl-3-(3-O-sulfo-beta-D-galactosyl)-sn-glycerol + adenosine 3',5'-bisphosphate + H(+). The enzyme catalyses a beta-D-Gal-(1-&gt;4)-beta-D-Glc-(1&lt;-&gt;1)-Cer(d18:1(4E)) + 3'-phosphoadenylyl sulfate = beta-D-3-sulfogalactosyl-(1-&gt;4)-beta-D-glucosyl-(1&lt;-&gt;1')-N-acylsphing-4-enine + adenosine 3',5'-bisphosphate + H(+). The protein operates within lipid metabolism; sphingolipid metabolism. In terms of biological role, catalyzes the transfer of a sulfate group to position 3 of non-reducing beta-galactosyl residues in glycerolipids and sphingolipids, therefore participates in the biosynthesis of sulfoglycolipids. Catalyzes the synthesis of galactosylceramide sulfate (sulfatide), a major lipid component of the myelin sheath and of monogalactosylalkylacylglycerol sulfate (seminolipid), present in spermatocytes. Seems to prefer beta-glycosides at the non-reducing termini of sugar chains attached to a lipid moiety. Also acts on lactosylceramide, galactosyl 1-alkyl-2-sn-glycerol and galactosyl diacylglycerol (in vitro). This is Galactosylceramide sulfotransferase from Bos taurus (Bovine).